Here is a 1163-residue protein sequence, read N- to C-terminus: GTPase-activating protein (1163 aa).

C2 domains lie at 26–148 and 261–419; these read PSSN…DHWF and TTST…SAWY. One can recognise a Ras-GAP domain in the interval 520-737; the sequence is ERIAPIIKAL…DAVKHFLEVI (218 aa). The PH domain occupies 762-860; sequence LKEGLMTKYP…WFDLLHKICL (99 aa). A Btk-type zinc finger spans residues 862-898; sequence NSIRMQYFHPSAFVSGFYSCCGRSDENSPGCKKVLDK. 4 residues coordinate Zn(2+): His-870, Cys-881, Cys-882, and Cys-892. Disordered regions lie at residues 1026 to 1051 and 1091 to 1163; these read LNQQHHQQQQHQQQQQQQQQQQLQQF and PFHQ…PPIY. Positions 1091–1157 are enriched in low complexity; it reads PFHQQQQQHH…APPSTTSSSQ (67 aa).

Interacts with sty. In third instar larvae eye imaginal disk, expressed in cells posterior to the morphogenetic furrow, in all photoreceptor and cone cell precursors as well as in still uncommitted cells.

In terms of biological role, inhibitory regulator of the Ras-cyclic AMP pathway. May function as a negative regulator of Ras85D/Ras1 in the sev signaling pathway. Acts cell autonomously in cone cell precursors as a negative regulator of R7 photoreceptor cell determination. The protein is GTPase-activating protein (RasGAP1) of Drosophila melanogaster (Fruit fly).